A 380-amino-acid chain; its full sequence is Chaperone protein DnaJ (380 aa).

The region spanning 5 to 72 (DFYEVLGVAK…NKRAAYDQYG (68 aa)) is the J domain. Residues 140–218 (GKDAQIRIPS…CGGQGKVKRQ (79 aa)) form a CR-type zinc finger. Zn(2+) contacts are provided by Cys-153, Cys-156, Cys-170, Cys-173, Cys-192, Cys-195, Cys-206, and Cys-209. CXXCXGXG motif repeat units follow at residues 153–160 (CDTCHGSG), 170–177 (CTTCNGMG), 192–199 (CPHCRGTG), and 206–213 (CTSCGGQG). Residues 359-380 (KGGAKHSPSGESWTDRLKSFFS) are disordered. Residues 371 to 380 (WTDRLKSFFS) show a composition bias toward basic and acidic residues.

It belongs to the DnaJ family. In terms of assembly, homodimer. The cofactor is Zn(2+).

It is found in the cytoplasm. Functionally, participates actively in the response to hyperosmotic and heat shock by preventing the aggregation of stress-denatured proteins and by disaggregating proteins, also in an autonomous, DnaK-independent fashion. Unfolded proteins bind initially to DnaJ; upon interaction with the DnaJ-bound protein, DnaK hydrolyzes its bound ATP, resulting in the formation of a stable complex. GrpE releases ADP from DnaK; ATP binding to DnaK triggers the release of the substrate protein, thus completing the reaction cycle. Several rounds of ATP-dependent interactions between DnaJ, DnaK and GrpE are required for fully efficient folding. Also involved, together with DnaK and GrpE, in the DNA replication of plasmids through activation of initiation proteins. In Delftia acidovorans (strain DSM 14801 / SPH-1), this protein is Chaperone protein DnaJ.